The primary structure comprises 368 residues: Type 2 DNA topoisomerase 6 subunit A (368 aa).

The Topo IIA-type catalytic domain occupies 9-148 (TEDEIARERL…FHMRPEESGA (140 aa)). The active-site O-(5'-phospho-DNA)-tyrosine intermediate is the Tyr-103. Residues Glu-201 and Asp-253 each contribute to the Mg(2+) site.

The protein belongs to the TOP6A family. As to quaternary structure, homodimer. Heterotetramer of two Top6A and two Top6B chains. It depends on Mg(2+) as a cofactor.

The catalysed reaction is ATP-dependent breakage, passage and rejoining of double-stranded DNA.. Functionally, relaxes both positive and negative superturns and exhibits a strong decatenase activity. This chain is Type 2 DNA topoisomerase 6 subunit A, found in Natronomonas pharaonis (strain ATCC 35678 / DSM 2160 / CIP 103997 / JCM 8858 / NBRC 14720 / NCIMB 2260 / Gabara) (Halobacterium pharaonis).